An 810-amino-acid polypeptide reads, in one-letter code: Volume-regulated anion channel subunit LRRC8A (810 aa).

Residue methionine 1 is modified to N-acetylmethionine. Residues 1 to 23 (MIPVTELRYFADTQPAYRILKPW) lie on the Cytoplasmic side of the membrane. Residues 24-47 (WDVFTDYISIVMLMIAVFGGTLQV) form a helical membrane-spanning segment. Residues 48-123 (TQDKMICLPC…YENRLHWFAK (76 aa)) lie on the Extracellular side of the membrane. Intrachain disulfides connect cysteine 54–cysteine 310, cysteine 57–cysteine 65, and cysteine 113–cysteine 295. Asparagine 66 and asparagine 83 each carry an N-linked (GlcNAc...) asparagine glycan. Residues 124 to 142 (YFPYLVLLHTLIFLACSNF) form a helical membrane-spanning segment. The Cytoplasmic segment spans residues 143-264 (WFKFPRTSSK…EEGDIVYRLY (122 aa)). Threonine 200 bears the Phosphothreonine mark. Serine 202 is modified (phosphoserine). At threonine 215 the chain carries Phosphothreonine. Phosphoserine is present on serine 217. Residues 265–286 (MRQTIIKVIKFILIICYTVYYV) form a helical membrane-spanning segment. The Extracellular portion of the chain corresponds to 287 to 316 (HNIKFDVDCTVDIESLTGYRTYRCAHPLAT). Residues 317 to 341 (LFKILASFYISLVIFYGLICMYTLW) traverse the membrane as a helical segment. The Cytoplasmic segment spans residues 342 to 810 (WMLRRSLKKY…RLWRADKEQA (469 aa)). LRR repeat units follow at residues 399–422 (ENKL…RLTK), 423–445 (NAQD…VFDL), 447–468 (ELEV…IAQL), 469–492 (TGLK…AFLR), 493–515 (ENLR…IYSL), 518–542 (LEEL…GLRE), 543–565 (LKRL…VTDV), 567–589 (VHLQ…SLKK), 590–613 (MANL…IFSL), 615–637 (NLQE…SFQH), 639–661 (HRLT…IGNL), 662–684 (TNLE…LFYC), 686–707 (KLRY…IGLL), 708–730 (QNLQ…LFQC), 732–753 (KLRA…VGEL), 754–776 (TNLT…LGEC), and 778–801 (LLKR…VKER). Residues 706 to 707 (LL) carry the Di-leucine motif motif.

Belongs to the LRRC8 family. In terms of assembly, heterohexamer; oligomerizes with other LRRC8 proteins (LRRC8B, LRRC8C, LRRC8D and/or LRRC8E) to form a heterohexamer. Can form homohexamers in vitro, but these have lower conductance than heterohexamers. In vivo, the subunit composition may depend primarily on expression levels, and heterooligomeric channels containing various proportions of the different LRRC8 proteins may coexist. Interact with GRB2. Interacts with NOX4; this interaction prevents the ubiquitin-mediated degradation of LRRC8A. N-glycosylated. As to expression, expressed in brain, kidney, ovary, lung, liver, heart, and fetal brain and liver. Found at high levels in bone marrow; lower levels are detected in peripheral blood cells. Expressed on T-cells as well as on B-lineage cells.

Its subcellular location is the cell membrane. It localises to the lysosome membrane. It carries out the reaction chloride(in) = chloride(out). It catalyses the reaction iodide(out) = iodide(in). The enzyme catalyses taurine(out) = taurine(in). The catalysed reaction is L-aspartate(out) = L-aspartate(in). It carries out the reaction L-glutamate(out) = L-glutamate(in). It catalyses the reaction myo-inositol(out) = myo-inositol(in). The enzyme catalyses 2',3'-cGAMP(out) = 2',3'-cGAMP(in). Inhibited by (4-[(2-butyl-6,7-dichloro-2-cyclopentyl-2,3-dihydro-1-oxo-1H-inden-5-yl)oxy]butanoic acid), which plugs the channel like a cork in a bottle by binding in the extracellular selectivity filter and sterically occluding ion conduction. Lipids may block conduction in closed heterohexameric channels. In terms of biological role, essential component of the volume-regulated anion channel (VRAC, also named VSOAC channel), an anion channel required to maintain a constant cell volume in response to extracellular or intracellular osmotic changes. The VRAC channel conducts iodide better than chloride and can also conduct organic osmolytes like taurine. Mediates efflux of amino acids, such as aspartate and glutamate, in response to osmotic stress. LRRC8A and LRRC8D are required for the uptake of the drug cisplatin. In complex with LRRC8C or LRRC8E, acts as a transporter of immunoreactive cyclic dinucleotide GMP-AMP (2'-3'-cGAMP), an immune messenger produced in response to DNA virus in the cytosol: mediates both import and export of 2'-3'-cGAMP, thereby promoting transfer of 2'-3'-cGAMP to bystander cells. In contrast, complexes containing LRRC8D inhibit transport of 2'-3'-cGAMP. Required for in vivo channel activity, together with at least one other family member (LRRC8B, LRRC8C, LRRC8D or LRRC8E); channel characteristics depend on the precise subunit composition. Can form functional channels by itself (in vitro). Involved in B-cell development: required for the pro-B cell to pre-B cell transition. Also required for T-cell development. Required for myoblast differentiation: VRAC activity promotes membrane hyperpolarization and regulates insulin-stimulated glucose metabolism and oxygen consumption. Also acts as a regulator of glucose-sensing in pancreatic beta cells: VRAC currents, generated in response to hypotonicity- or glucose-induced beta cell swelling, depolarize cells, thereby causing electrical excitation, leading to increase glucose sensitivity and insulin secretion. Also plays a role in lysosome homeostasis by forming functional lysosomal VRAC channels in response to low cytoplasmic ionic strength condition: lysosomal VRAC channels are necessary for the formation of large lysosome-derived vacuoles, which store and then expel excess water to maintain cytosolic water homeostasis. Acts as a key factor in NLRP3 inflammasome activation by modulating itaconate efflux and mitochondria function. The polypeptide is Volume-regulated anion channel subunit LRRC8A (Homo sapiens (Human)).